The following is a 487-amino-acid chain: Malonate-semialdehyde dehydrogenase (487 aa).

NAD(+)-binding residues include Ala-150, Phe-152, Lys-176, Glu-179, Arg-180, Ser-229, and Thr-251. Catalysis depends on Cys-284, which acts as the Nucleophile. Glu-382 lines the NAD(+) pocket.

It belongs to the aldehyde dehydrogenase family. IolA subfamily. Homotetramer.

It catalyses the reaction 3-oxopropanoate + NAD(+) + CoA + H2O = hydrogencarbonate + acetyl-CoA + NADH + H(+). It carries out the reaction 2-methyl-3-oxopropanoate + NAD(+) + CoA + H2O = propanoyl-CoA + hydrogencarbonate + NADH + H(+). Its pathway is polyol metabolism; myo-inositol degradation into acetyl-CoA; acetyl-CoA from myo-inositol: step 7/7. Its function is as follows. Catalyzes the oxidation of malonate semialdehyde (MSA) and methylmalonate semialdehyde (MMSA) into acetyl-CoA and propanoyl-CoA, respectively. Is involved in a myo-inositol catabolic pathway. Bicarbonate, and not CO2, is the end-product of the enzymatic reaction. The sequence is that of Malonate-semialdehyde dehydrogenase from Bacillus subtilis subsp. natto.